A 264-amino-acid polypeptide reads, in one-letter code: S-adenosylmethionine decarboxylase proenzyme (264 aa).

The active-site Schiff-base intermediate with substrate; via pyruvic acid is the serine 113. Serine 113 bears the Pyruvic acid (Ser); by autocatalysis mark. Catalysis depends on histidine 118, which acts as the Proton acceptor; for processing activity. Cysteine 141 functions as the Proton donor; for catalytic activity in the catalytic mechanism.

Belongs to the prokaryotic AdoMetDC family. Type 2 subfamily. Heterooctamer of four alpha and four beta chains arranged as a tetramer of alpha/beta heterodimers. Requires pyruvate as cofactor. In terms of processing, is synthesized initially as an inactive proenzyme. Formation of the active enzyme involves a self-maturation process in which the active site pyruvoyl group is generated from an internal serine residue via an autocatalytic post-translational modification. Two non-identical subunits are generated from the proenzyme in this reaction, and the pyruvate is formed at the N-terminus of the alpha chain, which is derived from the carboxyl end of the proenzyme. The post-translation cleavage follows an unusual pathway, termed non-hydrolytic serinolysis, in which the side chain hydroxyl group of the serine supplies its oxygen atom to form the C-terminus of the beta chain, while the remainder of the serine residue undergoes an oxidative deamination to produce ammonia and the pyruvoyl group blocking the N-terminus of the alpha chain.

The enzyme catalyses S-adenosyl-L-methionine + H(+) = S-adenosyl 3-(methylsulfanyl)propylamine + CO2. It functions in the pathway amine and polyamine biosynthesis; S-adenosylmethioninamine biosynthesis; S-adenosylmethioninamine from S-adenosyl-L-methionine: step 1/1. Catalyzes the decarboxylation of S-adenosylmethionine to S-adenosylmethioninamine (dcAdoMet), the propylamine donor required for the synthesis of the polyamines spermine and spermidine from the diamine putrescine. This is S-adenosylmethionine decarboxylase proenzyme from Stenotrophomonas maltophilia (strain R551-3).